The following is a 39-amino-acid chain: Photosystem II reaction center protein J (39 aa).

A helical transmembrane segment spans residues leucine 9–tyrosine 29.

The protein belongs to the PsbJ family. PSII is composed of 1 copy each of membrane proteins PsbA, PsbB, PsbC, PsbD, PsbE, PsbF, PsbH, PsbI, PsbJ, PsbK, PsbL, PsbM, PsbT, PsbX, PsbY, PsbZ, Psb30/Ycf12, at least 3 peripheral proteins of the oxygen-evolving complex and a large number of cofactors. It forms dimeric complexes.

It is found in the plastid. The protein resides in the chloroplast thylakoid membrane. One of the components of the core complex of photosystem II (PSII). PSII is a light-driven water:plastoquinone oxidoreductase that uses light energy to abstract electrons from H(2)O, generating O(2) and a proton gradient subsequently used for ATP formation. It consists of a core antenna complex that captures photons, and an electron transfer chain that converts photonic excitation into a charge separation. The protein is Photosystem II reaction center protein J of Gracilaria tenuistipitata var. liui (Red alga).